Reading from the N-terminus, the 1383-residue chain is DNA-directed RNA polymerase subunit beta (1383 aa).

It belongs to the RNA polymerase beta chain family. In terms of assembly, the RNAP catalytic core consists of 2 alpha, 1 beta, 1 beta' and 1 omega subunit. When a sigma factor is associated with the core the holoenzyme is formed, which can initiate transcription.

It catalyses the reaction RNA(n) + a ribonucleoside 5'-triphosphate = RNA(n+1) + diphosphate. Functionally, DNA-dependent RNA polymerase catalyzes the transcription of DNA into RNA using the four ribonucleoside triphosphates as substrates. This is DNA-directed RNA polymerase subunit beta from Bartonella quintana (strain Toulouse) (Rochalimaea quintana).